The following is an 88-amino-acid chain: Small ribosomal subunit protein bS18 (88 aa).

Residues 1-11 (MTTANTTAKDN) are compositionally biased toward low complexity. The disordered stretch occupies residues 1–21 (MTTANTTAKDNAATKKRGRKA).

This sequence belongs to the bacterial ribosomal protein bS18 family. In terms of assembly, part of the 30S ribosomal subunit. Forms a tight heterodimer with protein bS6.

Functionally, binds as a heterodimer with protein bS6 to the central domain of the 16S rRNA, where it helps stabilize the platform of the 30S subunit. This is Small ribosomal subunit protein bS18 from Thermoanaerobacter pseudethanolicus (strain ATCC 33223 / 39E) (Clostridium thermohydrosulfuricum).